The primary structure comprises 203 residues: MGGFVDDGAAGLAPSHGSSRAGRGLEGAGVFLRFVASLLSIAGLMLLVKDNQTVQQMVATEAVTLETKYSDISAFVFLLYTNGLVAVYCFFLALASVFSLIASARSGKLAGWVTFVLDQGLAYVLLAAAAASTEVLYLAENGDLKTSWAEICSQFGHFCHMARASIVVSFLSMLAMAVLSVMSAQQLFSKYRRPMTAKTAQDI.

The interval 1-21 is disordered; that stretch reads MGGFVDDGAAGLAPSHGSSRA. The Cytoplasmic segment spans residues 1-27; that stretch reads MGGFVDDGAAGLAPSHGSSRAGRGLEG. A helical transmembrane segment spans residues 28–48; that stretch reads AGVFLRFVASLLSIAGLMLLV. Residues 49–73 are Extracellular-facing; it reads KDNQTVQQMVATEAVTLETKYSDIS. An N-linked (GlcNAc...) asparagine glycan is attached at Asn51. Residues 74-94 form a helical membrane-spanning segment; the sequence is AFVFLLYTNGLVAVYCFFLAL. The Cytoplasmic portion of the chain corresponds to 95-108; it reads ASVFSLIASARSGK. Residues 109-129 form a helical membrane-spanning segment; that stretch reads LAGWVTFVLDQGLAYVLLAAA. At 130–163 the chain is on the extracellular side; sequence AASTEVLYLAENGDLKTSWAEICSQFGHFCHMAR. Residues 164-184 form a helical membrane-spanning segment; sequence ASIVVSFLSMLAMAVLSVMSA. Residues 185–203 are Cytoplasmic-facing; sequence QQLFSKYRRPMTAKTAQDI.

It belongs to the Casparian strip membrane proteins (CASP) family. In terms of assembly, homodimer and heterodimers.

The protein localises to the cell membrane. The polypeptide is CASP-like protein 2U2 (Osmunda lancea (Fern)).